A 263-amino-acid polypeptide reads, in one-letter code: Serine protease ami (263 aa).

A signal peptide spans 1–21; it reads MNISRVLFAVVLVLTVSTYEC. Asparagine 2 carries an N-linked (GlcNAc...) asparagine glycan. Positions 22–26 are cleaved as a propeptide — activation peptide; that stretch reads RPRGR. In terms of domain architecture, Peptidase S1 spans 27-254; it reads ILGGQDSKEK…YKSWIMETMY (228 aa). Cysteine 52 and cysteine 68 are disulfide-bonded. Histidine 67 serves as the catalytic Charge relay system. Residues asparagine 73, asparagine 74, and asparagine 108 are each glycosylated (N-linked (GlcNAc...) asparagine). Aspartate 115 acts as the Charge relay system in catalysis. Intrachain disulfides connect cysteine 149–cysteine 215, cysteine 180–cysteine 196, and cysteine 205–cysteine 230. The active-site Charge relay system is serine 209. Residue asparagine 255 is glycosylated (N-linked (GlcNAc...) asparagine).

Belongs to the peptidase S1 family. In terms of tissue distribution, in the embryo, localizes to paraxial regions at the neurula stage and anterior ventral regions at the tailbud stage. From the late tailbud to tadpole stage, expressed along the forming blood vessels including the anterior cardinal veins, posterior cardinal veins, intersomitic veins, dorsal longitudinal anastomosing vessel, dorsal aorta, pronephric sinus and most prominently around the vascular vitelline network, where expression shows left-right asymmetry in the stage 42 embryo. Localizes to endothelial cells. In adults, shows highest expression in liver with moderate levels of expression in the fat body, lung, gut and vessels. Weakly expressed in adult heart, muscle, testis and ovary.

The protein localises to the secreted. Probable serine protease. In Xenopus laevis (African clawed frog), this protein is Serine protease ami.